Consider the following 336-residue polypeptide: MKHLLKAGALVALACIVTLTAGAQAHAAKRINIRLAHPMAPGNNVTVGYEKFKELVAEKSNGRVRIQLFGNCMLGSDRVTMEAAQRGTLEMASSSSPNMANFSKQWMVFDLPYITSPEHQQKLYKAIDDGELGKKLDEIAASIGLKPIMYSEYGYRNFVTTKKPIKTADDLKNLKVRTTDSPIEVAVAAALGMAPTPISWGETYTALQQGTVDGEGNTFSLLNDAKHTEVLKYAIDSAHNYSMHLLMMNKAYYDSLPANVQQILTEAGREALTYQRSITSELEKKAEDAFIEQGITVTRLSPEERAKLVERTRPVWDKFKDDIPAELIKLVQETQQ.

The first 23 residues, 1–23, serve as a signal peptide directing secretion; the sequence is MKHLLKAGALVALACIVTLTAGA.

This sequence belongs to the bacterial solute-binding protein 7 family. In terms of assembly, the complex comprises the periplasmic solute receptor protein DctP, and the fused transmembrane protein DctMQ.

It localises to the periplasm. It carries out the reaction 2-hydroxyethane-1-sulfonate(out) + Na(+)(out) = 2-hydroxyethane-1-sulfonate(in) + Na(+)(in). It functions in the pathway organosulfur degradation; alkanesulfonate degradation. Its function is as follows. Part of the tripartite ATP-independent periplasmic (TRAP) transport system DctPQM involved in the uptake of isethionate (2-hydroxyethanesulfonate), which is then catabolized by enzymes encoded by adjacent genes in the locus. The DctP subunit is the solute-binding protein. Thereby is involved in an anaerobic respiration pathway that converts the sulfonate isethionate to ammonia, acetate and sulfide. The protein is Isethionate-binding periplasmic protein DctP of Oleidesulfovibrio alaskensis (strain ATCC BAA-1058 / DSM 17464 / G20) (Desulfovibrio alaskensis).